A 365-amino-acid chain; its full sequence is tRNA N6-adenosine threonylcarbamoyltransferase (365 aa).

2 residues coordinate Fe cation: H119 and H123. Substrate contacts are provided by residues 141-145 (LVSGG), D174, G187, and N288. D316 contacts Fe cation.

This sequence belongs to the KAE1 / TsaD family. It depends on Fe(2+) as a cofactor.

The protein resides in the cytoplasm. The enzyme catalyses L-threonylcarbamoyladenylate + adenosine(37) in tRNA = N(6)-L-threonylcarbamoyladenosine(37) in tRNA + AMP + H(+). In terms of biological role, required for the formation of a threonylcarbamoyl group on adenosine at position 37 (t(6)A37) in tRNAs that read codons beginning with adenine. Is involved in the transfer of the threonylcarbamoyl moiety of threonylcarbamoyl-AMP (TC-AMP) to the N6 group of A37, together with TsaE and TsaB. TsaD likely plays a direct catalytic role in this reaction. This Rhizobium leguminosarum bv. trifolii (strain WSM2304) protein is tRNA N6-adenosine threonylcarbamoyltransferase.